The sequence spans 71 residues: uncharacterized protein (71 aa).

Residues 52 to 71 (KEKFERKEDEKSKPKGVRED) are disordered.

This is an uncharacterized protein from Archaeoglobus fulgidus (strain ATCC 49558 / DSM 4304 / JCM 9628 / NBRC 100126 / VC-16).